The following is a 538-amino-acid chain: Thermosome subunit beta (538 aa).

A disordered region spans residues 518-538; sequence SSGSSEEGMEEMGGMGGMPPM. A compositionally biased stretch (gly residues) spans 528–538; that stretch reads EMGGMGGMPPM.

Belongs to the TCP-1 chaperonin family. As to quaternary structure, forms a Heterooligomeric complex of two stacked eight-membered rings.

Functionally, molecular chaperone; binds unfolded polypeptides in vitro, and has a weak ATPase activity. The polypeptide is Thermosome subunit beta (thsB) (Methanothermobacter thermautotrophicus (strain ATCC 29096 / DSM 1053 / JCM 10044 / NBRC 100330 / Delta H) (Methanobacterium thermoautotrophicum)).